The chain runs to 206 residues: Small ribosomal subunit protein uS4 (206 aa).

One can recognise an S4 RNA-binding domain in the interval 96–156 (QRLDNVVYRM…EKSKTQARII (61 aa)).

It belongs to the universal ribosomal protein uS4 family. Part of the 30S ribosomal subunit. Contacts protein S5. The interaction surface between S4 and S5 is involved in control of translational fidelity.

In terms of biological role, one of the primary rRNA binding proteins, it binds directly to 16S rRNA where it nucleates assembly of the body of the 30S subunit. With S5 and S12 plays an important role in translational accuracy. The polypeptide is Small ribosomal subunit protein uS4 (Pseudoalteromonas translucida (strain TAC 125)).